Consider the following 143-residue polypeptide: MNLNTKYHGCIEYEEKDVIYFEKGIPGFEELKKFIIFPVEDNDVFSVFHSIEKEDMGIIVISPFNIEKDYEIQLEEEQRKKLELQNEKDALVLNTVTLNSDIDKITVNLRAPIIINIKEKIGEQIIINSDKYKVKHPLFKEEA.

Belongs to the FliW family. As to quaternary structure, interacts with translational regulator CsrA and flagellin(s).

It localises to the cytoplasm. In terms of biological role, acts as an anti-CsrA protein, binds CsrA and prevents it from repressing translation of its target genes, one of which is flagellin. Binds to flagellin and participates in the assembly of the flagellum. This chain is Flagellar assembly factor FliW, found in Clostridium botulinum (strain Okra / Type B1).